Here is a 136-residue protein sequence, read N- to C-terminus: Small ribosomal subunit protein eS8 (136 aa).

The interval 1–23 is disordered; that stretch reads MGVYHGNDLKKPTGGKKRPHQKV. Over residues 13–23 the composition is skewed to basic residues; the sequence is TGGKKRPHQKV.

This sequence belongs to the eukaryotic ribosomal protein eS8 family. As to quaternary structure, part of the 30S ribosomal subunit.

This is Small ribosomal subunit protein eS8 from Hyperthermus butylicus (strain DSM 5456 / JCM 9403 / PLM1-5).